A 529-amino-acid polypeptide reads, in one-letter code: MKYIVVTGGVMSGLGKGITTASIGRLLKNRGYQVTAVKIDPYLNIDAGTMNPAQHGEVFVLSDGGEVDLDLGNYERFLDINLKSIHNITTGKVYRNVIEKERRGDFLGATVQIIPHITDEIRYCISRAAQETVNGGKVADVCMVEVGGTVGDIESMPFLEAVRQMHGDLAPEDMILVHVTLVPMDTMGDFKTKPTQHSVKALRELGLQPDIIVARSSDVIGPQTKKKISTFTDVPVKAVVSAKDAPDIYQIPMELEKEGLADVVCSYLSLENREPDTAWYRVVSQEYTNRVTVAIVSKYGIEDVYMSIKESLKHAGRALSTEVNIRWLDAETFELHDLADVDGILIPGGFGKRGIEGKIRAIRYARENKKPYLGLCLGFQLAVIEYTRHVLGIEDATSEEMGDGTHVIAILPEQEEVSDLGGTMRLGDCDVVLKDGTKVTGLYGKTAIVERHRHRYEVNPAFIADLEAAGLVFSGTCGPRMEVCEIPNHPFYLATQFHPEFRSSPTKPSPPYIGFVEACKKNKSSSEIR.

The segment at 1–270 (MKYIVVTGGV…ADVVCSYLSL (270 aa)) is amidoligase domain. S12 lines the CTP pocket. S12 is a binding site for UTP. Residues 13 to 18 (GLGKGI) and D70 contribute to the ATP site. Residues D70 and E145 each contribute to the Mg(2+) site. Residues 152-154 (DIE), 191-196 (KTKPTQ), and K227 contribute to the CTP site. UTP-binding positions include 191-196 (KTKPTQ) and K227. An ATP-binding site is contributed by 243–245 (KDA). In terms of domain architecture, Glutamine amidotransferase type-1 spans 293 to 525 (VAIVSKYGIE…VEACKKNKSS (233 aa)). Residue G349 coordinates L-glutamine. C376 functions as the Nucleophile; for glutamine hydrolysis in the catalytic mechanism. Residues 377-380 (LGFQ), E400, and R455 contribute to the L-glutamine site. Residues H498 and E500 contribute to the active site.

This sequence belongs to the CTP synthase family. Homotetramer.

The enzyme catalyses UTP + L-glutamine + ATP + H2O = CTP + L-glutamate + ADP + phosphate + 2 H(+). The catalysed reaction is L-glutamine + H2O = L-glutamate + NH4(+). It carries out the reaction UTP + NH4(+) + ATP = CTP + ADP + phosphate + 2 H(+). The protein operates within pyrimidine metabolism; CTP biosynthesis via de novo pathway; CTP from UDP: step 2/2. Allosterically activated by GTP, when glutamine is the substrate; GTP has no effect on the reaction when ammonia is the substrate. The allosteric effector GTP functions by stabilizing the protein conformation that binds the tetrahedral intermediate(s) formed during glutamine hydrolysis. Inhibited by the product CTP, via allosteric rather than competitive inhibition. Functionally, catalyzes the ATP-dependent amination of UTP to CTP with either L-glutamine or ammonia as the source of nitrogen. Regulates intracellular CTP levels through interactions with the four ribonucleotide triphosphates. This Methanoculleus marisnigri (strain ATCC 35101 / DSM 1498 / JR1) protein is CTP synthase.